The following is a 79-amino-acid chain: Cell division protein ZapB (79 aa).

Positions 4–78 (EVFEKLEAKV…LRALLGKMEE (75 aa)) form a coiled coil.

The protein belongs to the ZapB family. In terms of assembly, homodimer. The ends of the coiled-coil dimer bind to each other, forming polymers. Interacts with FtsZ.

It localises to the cytoplasm. In terms of biological role, non-essential, abundant cell division factor that is required for proper Z-ring formation. It is recruited early to the divisome by direct interaction with FtsZ, stimulating Z-ring assembly and thereby promoting cell division earlier in the cell cycle. Its recruitment to the Z-ring requires functional FtsA or ZipA. The protein is Cell division protein ZapB of Erwinia tasmaniensis (strain DSM 17950 / CFBP 7177 / CIP 109463 / NCPPB 4357 / Et1/99).